A 451-amino-acid polypeptide reads, in one-letter code: Cobyrinate a,c-diamide synthase (451 aa).

The GATase cobBQ-type domain occupies 246–437 (KIGVAYDEVF…VHTHVAAMPN (192 aa)). Cys328 (nucleophile) is an active-site residue.

It belongs to the CobB/CbiA family. The cofactor is Mg(2+).

It carries out the reaction cob(II)yrinate + 2 L-glutamine + 2 ATP + 2 H2O = cob(II)yrinate a,c diamide + 2 L-glutamate + 2 ADP + 2 phosphate + 2 H(+). The enzyme catalyses Ni-sirohydrochlorin + 2 L-glutamine + 2 ATP + 2 H2O = Ni-sirohydrochlorin a,c-diamide + 2 L-glutamate + 2 ADP + 2 phosphate + 2 H(+). It participates in cofactor biosynthesis; adenosylcobalamin biosynthesis; cob(II)yrinate a,c-diamide from sirohydrochlorin (anaerobic route): step 10/10. Catalyzes the ATP-dependent amidation of the two carboxylate groups at positions a and c of cobyrinate, using either L-glutamine or ammonia as the nitrogen source. Involved in the biosynthesis of the unique nickel-containing tetrapyrrole coenzyme F430, the prosthetic group of methyl-coenzyme M reductase (MCR), which plays a key role in methanogenesis and anaerobic methane oxidation. Catalyzes the ATP-dependent amidation of the two carboxylate groups at positions a and c of Ni-sirohydrochlorin, using L-glutamine or ammonia as the nitrogen source. This chain is Cobyrinate a,c-diamide synthase, found in Methanobrevibacter smithii (strain ATCC 35061 / DSM 861 / OCM 144 / PS).